Consider the following 491-residue polypeptide: Delayed-rectifier potassium channel regulatory subunit KCNS3 (491 aa).

At 1-182 the chain is on the cytoplasmic side; it reads MVFGEFFHRP…IRMENPAYCL (182 aa). A helical membrane pass occupies residues 183–204; sequence SAKLIAISSLSVVLASIVAMCV. Over 205 to 220 the chain is Extracellular; it reads HSMSEFQNEDGEVDDP. Residues 221–243 traverse the membrane as a helical segment; it reads VLEGVEIACIAWFTGELAIRLVA. Topologically, residues 244 to 254 are cytoplasmic; it reads APSQKKFWKNP. Residues 255-275 traverse the membrane as a helical segment; it reads LNIIDFVSIIPFYATLAVDTK. The Extracellular portion of the chain corresponds to 276–285; the sequence is EEESEDIENM. The chain crosses the membrane as a helical; Voltage-sensor span at residues 286-306; it reads GKVVQILRLMRIFRILKLARH. Residues 307–321 lie on the Cytoplasmic side of the membrane; it reads SVGLRSLGATLRHSY. Residues 322 to 343 form a helical membrane-spanning segment; that stretch reads HEVGLLLLFLSVGISIFSVLIY. Over 344–357 the chain is Extracellular; it reads SVEKDELASSLTSI. Positions 358 to 369 form an intramembrane region, helical; it reads PICWWWATISMT. Positions 370-375 match the Selectivity filter motif; that stretch reads TVGYGD. An intramembrane segment occupies 370-377; sequence TVGYGDTH. The Extracellular segment spans residues 378-384; sequence PVTLAGK. Residues 385 to 413 traverse the membrane as a helical segment; sequence IIASTCIICGILVVALPITIIFNKFSKYY. The Cytoplasmic portion of the chain corresponds to 414-491; the sequence is QKQKDMDVDQ…TASLENCTAK (78 aa).

The protein belongs to the potassium channel family. S (TC 1.A.1.2) subfamily. Kv9.3/KCNS3 sub-subfamily. As to quaternary structure, heterotetramer with KCNB1. Does not form homomultimers. Expressed in myocytes. Detected in lung, spleen, brain and heart.

Its subcellular location is the cell membrane. Functionally, potassium channel regulatory subunit that modulates the delayed rectifier potassium channel activity of KCNB1 by namely slowing down the deactivation and inactivation time constants. While it does not form functional channel on its own, it can form functional heterotetrameric channels with KCNB1. This chain is Delayed-rectifier potassium channel regulatory subunit KCNS3, found in Rattus norvegicus (Rat).